Here is a 218-residue protein sequence, read N- to C-terminus: Ribonuclease HII (218 aa).

The 194-residue stretch at 23-216 folds into the RNase H type-2 domain; it reads RFLCGVDEAG…VREAIARGLV (194 aa). A divalent metal cation contacts are provided by D29, E30, and D125.

It belongs to the RNase HII family. Requires Mn(2+) as cofactor. Mg(2+) serves as cofactor.

Its subcellular location is the cytoplasm. The enzyme catalyses Endonucleolytic cleavage to 5'-phosphomonoester.. Endonuclease that specifically degrades the RNA of RNA-DNA hybrids. The polypeptide is Ribonuclease HII (Cupriavidus pinatubonensis (strain JMP 134 / LMG 1197) (Cupriavidus necator (strain JMP 134))).